The primary structure comprises 409 residues: MSVMDAIVVKKPQAARPSSGAEKPSLIGLSREEMAAALREKGVPEKQIKMRVSQLWNWIYVRGVSDFDHMTNVAKDMREMLKQHFTIARPEIVEEQVSNDGTRKWLLRFPARGAGRPVEIEAVYIPEEGRGTLCISSQVGCTLTCSFCHTGTQRLVRNLTAEEILSQLLLARDRLGDFPDREAPQGTIMPAEGRKVSNIVMMGMGEPLYNFDAVKQALLIATDGDGLSLSKRRVTLSTSGVVPEIFRTGEEIGVMLAISLHAVRDDLRDILVPINKKYPLKELIDACKAYPGLSNARRITFEYVMLKDVNDSLEDAKGLIKLLKGVPAKINLIPFNPWPGTNYQCSDWEQIEKFADFINSAGYASPIRTPRGRDILAACGQLKSESERMRKTERLAFEAMMIANHGADD.

Catalysis depends on Glu-121, which acts as the Proton acceptor. The Radical SAM core domain occupies 127 to 376 (EEGRGTLCIS…IRTPRGRDIL (250 aa)). Cysteines 134 and 379 form a disulfide. Residues Cys-141, Cys-145, and Cys-148 each contribute to the [4Fe-4S] cluster site. Residues 205–206 (GE), Ser-237, 259–261 (SLH), and Asn-336 each bind S-adenosyl-L-methionine. Catalysis depends on Cys-379, which acts as the S-methylcysteine intermediate.

Belongs to the radical SAM superfamily. RlmN family. The cofactor is [4Fe-4S] cluster.

Its subcellular location is the cytoplasm. It carries out the reaction adenosine(2503) in 23S rRNA + 2 reduced [2Fe-2S]-[ferredoxin] + 2 S-adenosyl-L-methionine = 2-methyladenosine(2503) in 23S rRNA + 5'-deoxyadenosine + L-methionine + 2 oxidized [2Fe-2S]-[ferredoxin] + S-adenosyl-L-homocysteine. It catalyses the reaction adenosine(37) in tRNA + 2 reduced [2Fe-2S]-[ferredoxin] + 2 S-adenosyl-L-methionine = 2-methyladenosine(37) in tRNA + 5'-deoxyadenosine + L-methionine + 2 oxidized [2Fe-2S]-[ferredoxin] + S-adenosyl-L-homocysteine. Specifically methylates position 2 of adenine 2503 in 23S rRNA and position 2 of adenine 37 in tRNAs. m2A2503 modification seems to play a crucial role in the proofreading step occurring at the peptidyl transferase center and thus would serve to optimize ribosomal fidelity. The polypeptide is Dual-specificity RNA methyltransferase RlmN (Rhizobium etli (strain ATCC 51251 / DSM 11541 / JCM 21823 / NBRC 15573 / CFN 42)).